Reading from the N-terminus, the 1187-residue chain is Protein CHROMATIN REMODELING 8 (1187 aa).

The segment at 1 to 55 (MEEDEDQFLLSSLGVTSANPEDLEQKILDEATKKPDNDEGGSVEEKSTQLEGTNL) is disordered. A compositionally biased stretch (polar residues) spans 9 to 19 (LLSSLGVTSAN). Basic and acidic residues predominate over residues 23–48 (LEQKILDEATKKPDNDEGGSVEEKST). The stretch at 110-170 (LQHALATDRL…LKRKLKEIRK (61 aa)) forms a coiled coil. Positions 162-169 (KRKLKEIR) match the Nuclear localization signal 1 motif. 2 disordered regions span residues 223–247 (GFER…DENE) and 273–343 (DAED…DGRR). 2 short sequence motifs (nuclear localization signal) span residues 290–297 (LRKLYKTP) and 310–317 (GKKSKKTR). Basic residues predominate over residues 305 to 328 (KKRKAGKKSKKTRPLPEKKWRKRI). In terms of domain architecture, Helicase ATP-binding spans 397 to 594 (WELHCQRAGG…WSLFDFVFPG (198 aa)). 410-417 (DEMGLGKT) is an ATP binding site. The disordered stretch occupies residues 467–501 (SAQDSGHGKGQGKASESDYDSESSVDSDHEPKSKN). Over residues 492-501 (DSDHEPKSKN) the composition is skewed to basic and acidic residues. The short motif at 545 to 548 (DEGH) is the DEGH box element. The 161-residue stretch at 730 to 890 (KVVAEVLKVW…RRFFKARDMK (161 aa)) folds into the Helicase C-terminal domain. The stretch at 987–1016 (NANDEEEKMRLEHQASQVAQRAAEALRQSR) forms a coiled coil. Over residues 1050 to 1059 (VNSRLTQTGD) the composition is skewed to polar residues. The interval 1050–1075 (VNSRLTQTGDKPSAIKNGISAGLSSG) is disordered.

This sequence belongs to the SNF2/RAD54 helicase family. Homodimer. Binds DNA.

The protein resides in the nucleus. Functionally, essential factor involved in transcription-coupled nucleotide excision repair (TCR) which allows RNA polymerase II-blocking lesions to be rapidly removed from the transcribed strand of active genes. Upon DNA-binding, it locally modifies DNA conformation by wrapping the DNA around itself, thereby modifying the interface between stalled RNA polymerase II and DNA. It is required for transcription-coupled repair complex formation. The protein is Protein CHROMATIN REMODELING 8 of Arabidopsis thaliana (Mouse-ear cress).